Consider the following 496-residue polypeptide: L-arabinose isomerase (496 aa).

Glu-302, Glu-329, His-346, and His-445 together coordinate Mn(2+).

The protein belongs to the arabinose isomerase family. It depends on Mn(2+) as a cofactor.

It carries out the reaction beta-L-arabinopyranose = L-ribulose. The protein operates within carbohydrate degradation; L-arabinose degradation via L-ribulose; D-xylulose 5-phosphate from L-arabinose (bacterial route): step 1/3. Catalyzes the conversion of L-arabinose to L-ribulose. The polypeptide is L-arabinose isomerase (Thermotoga neapolitana (strain ATCC 49049 / DSM 4359 / NBRC 107923 / NS-E)).